The following is a 174-amino-acid chain: Regenerating islet-derived protein 3-gamma (174 aa).

A signal peptide spans 1 to 26; sequence MLPRITITIMSWMLLSCLMLLSQVQG. A propeptide spanning residues 27 to 37 is cleaved from the precursor; it reads EVAKKDAPSSR. Disulfide bonds link cysteine 40–cysteine 51, cysteine 68–cysteine 170, and cysteine 145–cysteine 162. The 125-residue stretch at 47–171 folds into the C-type lectin domain; it reads YGSYCYALFS…CNLELPYVCK (125 aa). Residues 103 to 118 are sufficient to activate EXTL3; it reads WIGLHDPTLGYEPNRG. A Zn(2+)-binding site is contributed by histidine 107. The EPN motif lies at 114 to 116; that stretch reads EPN. Zn(2+) is bound by residues glutamate 121 and histidine 144.

As to quaternary structure, forms a hexameric membrane-permeabilizing oligomeric pore on membrane phospholipids. The hexamer is formed by three dimers related by helical symmetry. Forms filaments, filamentation traps pore complexes and limits damage to host cells. Interacts with EXTL3. Proteolytic processing by trypsin removes an inhibitory N-terminal propeptide and is essential for peptidoglycan binding and antibacterial activity. In terms of tissue distribution, predominantly expressed in the small intestine, including Paneth cells (at protein level). Hardly detectable in the colon (at protein level). Highly expressed in the lung epithelium during methicillin-resistant S.aureus infection and allergic airway inflammation (at protein level). Skin injury increases its epidermal expression. Also expressed in the pancreas. Expressed by nocireceptors.

It localises to the secreted. It is found in the cytoplasm. Lipopolysaccharide inhibits pore-forming activity, explaining why is bactericidal for Gram-positive but not Gram-negative bacteria. Functionally, bactericidal C-type lectin which acts exclusively against Gram-positive bacteria and mediates bacterial killing by binding to surface-exposed carbohydrate moieties of peptidoglycan. Restricts bacterial colonization of the intestinal epithelial surface and consequently limits activation of adaptive immune responses by the microbiota. Its function is as follows. Acts as a hormone in response to different stimuli like anti-inflammatory signals, such as IL17A, or gut microbiome. Is secreted by different cell types to activate its receptor EXTL3 and induce cell specific signaling pathways. Induced by IL17A in keratinocytes, regulates keratinocyte proliferation and differentiation after skin injury. In parallel, inhibits skin inflammation through the inhibition of inflammatory cytokines such as IL6 and TNF. Induced by IL22 in lung epithelial cells, inhibits cytokine production and regulates allergic airway inflammation. Induced in small intestine by inulin-enriched diet and Lactobacillus gasseri enriched microbiome, plays a role in the improvement of gut barrier function, the regulation of energy balance and glucose levels. Modulates microbiota composition in duodenal contents. Produced by nociceptor in response to endotoxins, prevents endotoxic death by targeting kynurenine pathway in microglia. In terms of biological role, has bacteriostatic activity. Has bactericidal activity against L.monocytogenes and methicillin-resistant S.aureus. This chain is Regenerating islet-derived protein 3-gamma, found in Mus musculus (Mouse).